The primary structure comprises 351 residues: GDP-mannose 4,6-dehydratase (351 aa).

Residues 11-16 (GVTGQD), 66-67 (DM), 88-92 (LAAQS), and Tyr-103 each bind NADP(+). Thr-135 is an active-site residue. Residues Glu-137 and Tyr-159 each act as nucleophile in the active site. Residues Lys-163, His-189, and Arg-194 each coordinate NADP(+).

The protein belongs to the NAD(P)-dependent epimerase/dehydratase family. GDP-mannose 4,6-dehydratase subfamily. NADP(+) serves as cofactor.

The catalysed reaction is GDP-alpha-D-mannose = GDP-4-dehydro-alpha-D-rhamnose + H2O. It functions in the pathway nucleotide-sugar biosynthesis; GDP-L-fucose biosynthesis via de novo pathway; GDP-L-fucose from GDP-alpha-D-mannose: step 1/2. Catalyzes the conversion of GDP-D-mannose to GDP-4-dehydro-6-deoxy-D-mannose. The polypeptide is GDP-mannose 4,6-dehydratase (Sinorhizobium fredii (strain HH103)).